The chain runs to 992 residues: RNA-binding protein 12 (992 aa).

Residues 304 to 379 enclose the RRM 1 domain; the sequence is LYVSVHGMPF…RYVEVSPATE (76 aa). 2 positions are modified to phosphoserine: Ser-352 and Ser-375. The disordered stretch occupies residues 393 to 424; that stretch reads QSMGPSGQAHPPPQTLPRSKSPSGQKRSRSRS. Residues 408–417 are compositionally biased toward polar residues; the sequence is LPRSKSPSGQ. Phosphoserine occurs at positions 420, 422, and 424. Residues 430 to 507 form the RRM 2 domain; sequence FCVYLKGLPF…RFIQVHPITK (78 aa). The residue at position 525 (Ser-525) is a Phosphoserine. Residues 849-913 are disordered; it reads FGGIPQNFGN…PGFGASSGKP (65 aa). The span at 876–887 shows a compositional bias: low complexity; it reads LGSVPGHLSGPP. One can recognise an RRM 3 domain in the interval 916–992; it reads TIIKVQNMPF…GSRKVKLVLG (77 aa).

The protein resides in the nucleus. The sequence is that of RNA-binding protein 12 (Rbm12) from Mus musculus (Mouse).